Consider the following 112-residue polypeptide: Ig kappa chain V-III region PC 7132 (112 aa).

The interval 1 to 23 (DIVLTQSPASLAVSLGQRATISC) is framework-1. Cysteine 23 and cysteine 92 form a disulfide bridge. The complementarity-determining-1 stretch occupies residues 24–38 (RASESVDNYGISFMN). Residues 39-53 (WFQQKPGQPPKLLIY) form a framework-2 region. The tract at residues 54-60 (AASNQGS) is complementarity-determining-2. A framework-3 region spans residues 61–92 (GVPARFSGSGSGTDFSLNIHPMEEDDTAMYFC). The segment at 93-102 (QQSKEVPPYT) is complementarity-determining-3. Positions 103–112 (FGGGTKLEIK) are framework-4.

The polypeptide is Ig kappa chain V-III region PC 7132 (Mus musculus (Mouse)).